Here is a 717-residue protein sequence, read N- to C-terminus: Scinderin (717 aa).

The actin-severing stretch occupies residues 1-363 (MAPERHPPAF…DGFGKVYVTE (363 aa)). One copy of the Gelsolin-like 1 repeat lies at 28-108 (ELVPVPPSRH…IQGYESNEFV (81 aa)). A 1,2-diacyl-sn-glycero-3-phospho-(1D-myo-inositol-4,5-bisphosphate)-binding positions include 112–119 (KGGIKYKA) and 138–146 (RLLHIKGRR). Gelsolin-like repeat units follow at residues 148–220 (VRAT…PDEL), 265–340 (VVAE…TPIF), 408–483 (RVPV…PHLL), 526–590 (AEVD…EEFW), and 628–703 (IEEV…PPTF). The interval 364 to 715 (RVAKIEQIEF…WFLAWDSNKW (352 aa)) is ca(2+)-dependent actin binding. Ca(2+)-binding residues include asparagine 538, aspartate 539, glutamate 562, aspartate 643, aspartate 644, and glutamate 666.

This sequence belongs to the villin/gelsolin family.

It localises to the cytoplasm. The protein resides in the cytoskeleton. Its subcellular location is the cell projection. The protein localises to the podosome. In terms of biological role, ca(2+)-dependent actin filament-severing protein that has a regulatory function in exocytosis by affecting the organization of the microfilament network underneath the plasma membrane. In vitro, also has barbed end capping and nucleating activities in the presence of Ca(2+). Severing activity is inhibited by phosphatidylinositol 4,5-bis-phosphate (PIP2). Required for megakaryocyte differentiation, maturation, polyploidization and apoptosis with the release of platelet-like particles. Plays a role in osteoclastogenesis (OCG) and actin cytoskeletal organization in osteoclasts. Regulates chondrocyte proliferation and differentiation. Inhibits cell proliferation and tumorigenesis. Signaling is mediated by MAPK, p38 and JNK pathways. This is Scinderin (SCIN) from Gallus gallus (Chicken).